We begin with the raw amino-acid sequence, 327 residues long: Eukaryotic translation initiation factor 3 subunit I (327 aa).

WD repeat units lie at residues 8–47 (GHQRAITQIKYNREGDLIFSSAKDSKPSVWYSLNGERLGT), 50–89 (GHIGAVWCVDVDWTTTRLITGAGDMNTFLWDVETGTALGK), 147–186 (EQQSKITSMLWGALDETVITGHENGSLRIWDLRAVKELNS), 189–228 (DHTASITDMQMSSDGTMFVSSSKDCSAKLFDSDSLMCLKT), and 286–327 (GHFG…HTFE).

It belongs to the eIF-3 subunit I family. In terms of assembly, component of the eukaryotic translation initiation factor 3 (eIF-3) complex.

It localises to the cytoplasm. Component of the eukaryotic translation initiation factor 3 (eIF-3) complex, which is involved in protein synthesis of a specialized repertoire of mRNAs and, together with other initiation factors, stimulates binding of mRNA and methionyl-tRNAi to the 40S ribosome. The eIF-3 complex specifically targets and initiates translation of a subset of mRNAs involved in cell proliferation. The protein is Eukaryotic translation initiation factor 3 subunit I of Anopheles gambiae (African malaria mosquito).